We begin with the raw amino-acid sequence, 186 residues long: Elongation factor P (186 aa).

It belongs to the elongation factor P family.

It localises to the cytoplasm. Its pathway is protein biosynthesis; polypeptide chain elongation. Its function is as follows. Involved in peptide bond synthesis. Stimulates efficient translation and peptide-bond synthesis on native or reconstituted 70S ribosomes in vitro. Probably functions indirectly by altering the affinity of the ribosome for aminoacyl-tRNA, thus increasing their reactivity as acceptors for peptidyl transferase. This is Elongation factor P from Streptococcus sanguinis (strain SK36).